The primary structure comprises 321 residues: Cytochrome c biogenesis protein CcsA (321 aa).

8 helical membrane passes run Met-1–Val-21, Leu-36–Ile-56, Leu-70–Val-90, Gly-97–Leu-117, Ile-143–Ile-163, Val-229–Asn-249, Trp-256–Leu-276, and Ala-290–Leu-310.

This sequence belongs to the CcmF/CycK/Ccl1/NrfE/CcsA family. In terms of assembly, may interact with Ccs1.

It is found in the plastid. Its subcellular location is the chloroplast thylakoid membrane. In terms of biological role, required during biogenesis of c-type cytochromes (cytochrome c6 and cytochrome f) at the step of heme attachment. This Cycas taitungensis (Prince sago) protein is Cytochrome c biogenesis protein CcsA.